The following is a 189-amino-acid chain: Glycerol-3-phosphate acyltransferase (189 aa).

5 consecutive transmembrane segments (helical) span residues 1 to 21 (MVWL…AVLL), 50 to 70 (KLAI…VLVA), 72 to 92 (WLGL…IGHL), 111 to 131 (MLLG…LLTF), and 151 to 171 (LLAW…GLIV).

It belongs to the PlsY family. Probably interacts with PlsX.

It is found in the cell inner membrane. The catalysed reaction is an acyl phosphate + sn-glycerol 3-phosphate = a 1-acyl-sn-glycero-3-phosphate + phosphate. It participates in lipid metabolism; phospholipid metabolism. Functionally, catalyzes the transfer of an acyl group from acyl-phosphate (acyl-PO(4)) to glycerol-3-phosphate (G3P) to form lysophosphatidic acid (LPA). This enzyme utilizes acyl-phosphate as fatty acyl donor, but not acyl-CoA or acyl-ACP. This is Glycerol-3-phosphate acyltransferase from Pseudomonas aeruginosa (strain LESB58).